A 137-amino-acid chain; its full sequence is MLDKLENTFHFQQEALSLRNKRQEILAANIANADTPGFQARDIDFAAELKKTMENGRTGSHGLQLTMTSERHIPIKPGYRLEADLLYRVPHQTSMDGNTVDMDMERSNFADNSVKYQADVTFINSQVKSMMAVLQQG.

It belongs to the flagella basal body rod proteins family. As to quaternary structure, the basal body constitutes a major portion of the flagellar organelle and consists of a number of rings mounted on a central rod. In Gram-negative bacteria, at least four rings, L, P, S and M are present, whereas Gram-positive bacteria lack the L and P rings. The rod consists of about 26 subunits of FlgG in the distal portion, and FlgB, FlgC and FlgF build up the proximal portion of the rod with about 6 subunits each. Rod assembly occurs by export via the flagellum-specific pathway of its constituent proteins and by their incorporation into the rod structure in the probable order of FlgB, FlgC, FlgF and FlgG. Another protein, FliE, also assembles onto the stable rod structure.

The protein resides in the bacterial flagellum basal body. In terms of biological role, structural component of flagellum, the bacterial motility apparatus. Part of the rod structure of flagellar basal body. This chain is Flagellar basal body rod protein FlgB, found in Proteus mirabilis (strain HI4320).